Here is a 454-residue protein sequence, read N- to C-terminus: Bifunctional protein GlmU (454 aa).

The interval 1-227 is pyrophosphorylase; it reads MTQLSVVILA…FMEVEGANNR (227 aa). Residues 9 to 12, lysine 23, glutamine 74, 79 to 80, 101 to 103, glycine 138, glutamate 152, asparagine 167, and asparagine 225 each bind UDP-N-acetyl-alpha-D-glucosamine; these read LAAG, GT, and YGD. A Mg(2+)-binding site is contributed by aspartate 103. Residue asparagine 225 coordinates Mg(2+). The interval 228–248 is linker; sequence LQLAALERFYQKTQAEKLLLA. The interval 249 to 454 is N-acetyltransferase; it reads GVRLIDQARF…QGWQRPTKKK (206 aa). Residues arginine 331 and lysine 349 each coordinate UDP-N-acetyl-alpha-D-glucosamine. Histidine 361 serves as the catalytic Proton acceptor. Positions 364 and 375 each coordinate UDP-N-acetyl-alpha-D-glucosamine. Acetyl-CoA is bound by residues alanine 378, 384 to 385, serine 403, alanine 421, and arginine 438; that span reads NY.

It in the N-terminal section; belongs to the N-acetylglucosamine-1-phosphate uridyltransferase family. This sequence in the C-terminal section; belongs to the transferase hexapeptide repeat family. Homotrimer. It depends on Mg(2+) as a cofactor.

It localises to the cytoplasm. The catalysed reaction is alpha-D-glucosamine 1-phosphate + acetyl-CoA = N-acetyl-alpha-D-glucosamine 1-phosphate + CoA + H(+). The enzyme catalyses N-acetyl-alpha-D-glucosamine 1-phosphate + UTP + H(+) = UDP-N-acetyl-alpha-D-glucosamine + diphosphate. It functions in the pathway nucleotide-sugar biosynthesis; UDP-N-acetyl-alpha-D-glucosamine biosynthesis; N-acetyl-alpha-D-glucosamine 1-phosphate from alpha-D-glucosamine 6-phosphate (route II): step 2/2. It participates in nucleotide-sugar biosynthesis; UDP-N-acetyl-alpha-D-glucosamine biosynthesis; UDP-N-acetyl-alpha-D-glucosamine from N-acetyl-alpha-D-glucosamine 1-phosphate: step 1/1. Its pathway is bacterial outer membrane biogenesis; LPS lipid A biosynthesis. Its function is as follows. Catalyzes the last two sequential reactions in the de novo biosynthetic pathway for UDP-N-acetylglucosamine (UDP-GlcNAc). The C-terminal domain catalyzes the transfer of acetyl group from acetyl coenzyme A to glucosamine-1-phosphate (GlcN-1-P) to produce N-acetylglucosamine-1-phosphate (GlcNAc-1-P), which is converted into UDP-GlcNAc by the transfer of uridine 5-monophosphate (from uridine 5-triphosphate), a reaction catalyzed by the N-terminal domain. In Actinobacillus pleuropneumoniae serotype 7 (strain AP76), this protein is Bifunctional protein GlmU.